Consider the following 508-residue polypeptide: Protein adenylyltransferase fic-1 (508 aa).

Residues 44–64 traverse the membrane as a helical segment; that stretch reads TVIIISVLVSLICQHFVPYAV. TPR repeat units follow at residues 147-180 and 181-214; these read AILA…APTN and PQIL…DPGN. Positions 270 to 275 match the Inhibitory (S/T)XXXE(G/N) motif motif; the sequence is TVAIEG. E274 provides a ligand contact to ATP. Residues 326-461 form the Fido domain; the sequence is ISIDDILEMH…LRPFVRYVAK (136 aa). An O-AMP-threonine; by autocatalysis modification is found at T352. ATP is bound at residue 357–360; it reads VGRF. Residue H404 is part of the active site. ATP-binding positions include 408–415, 440–441, and N448; these read DGNGRTAR and YY. T476 carries the post-translational modification O-AMP-threonine; by autocatalysis. Residues 482–508 are disordered; it reads LNSGDSKLTPEESEVSEKIEAECRAGN. Positions 496–508 are enriched in basic and acidic residues; that stretch reads VSEKIEAECRAGN.

It belongs to the fic family. As to quaternary structure, forms homodimers; homodimerization might be required for adenylyltransferase activity. Ubiquitously expressed, with high expression in the germline.

It localises to the endoplasmic reticulum membrane. The protein localises to the nucleus membrane. It catalyses the reaction L-tyrosyl-[protein] + ATP = O-(5'-adenylyl)-L-tyrosyl-[protein] + diphosphate. The catalysed reaction is L-threonyl-[protein] + ATP = 3-O-(5'-adenylyl)-L-threonyl-[protein] + diphosphate. It carries out the reaction 3-O-(5'-adenylyl)-L-threonyl-[protein] + H2O = L-threonyl-[protein] + AMP + H(+). The side chain of Glu-274 determines which of the two opposing activities (AMPylase or de-AMPylase) will take place. In response to endoplasmic reticulum stress, mediates de-AMPylase activity. Adenylyltransferase activity is inhibited by the inhibitory helix present at the N-terminus: Glu-274 binds ATP and competes with ATP-binding at Arg-415, thereby preventing adenylyltransferase activity. In unstressed cells, disengagement of Glu-274 promotes adenylyltransferase activity. Activation dissociates ATP-binding from Glu-274, allowing ordered binding of the entire ATP moiety with the alpha-phosphate in an orientation that is productive for accepting an incoming target hydroxyl side chain. In terms of biological role, protein that can both mediate the addition of adenosine 5'-monophosphate (AMP) to specific residues of target proteins (AMPylation), and the removal of the same modification from target proteins (de-AMPylation), depending on the context. The side chain of Glu-274 determines which of the two opposing activities (AMPylase or de-AMPylase) will take place. Adenylyltransferase that mediates the addition of adenosine 5'-monophosphate (AMP) to specific residues of target proteins. In vivo target proteins include the heat-shock 70 family proteins hsp-1 and hsp-3 and the translation elongation factors eef-1A, eef-1G and eef-2. Can AMPylate core histone H3 in vitro. Can also act as a phosphodiesterase by mediating removal of ATP (de-AMPylation) from target proteins. Decreases susceptibility to P.aeruginosa-mediated killing and might therefore play a role in the innate immune response. This chain is Protein adenylyltransferase fic-1, found in Caenorhabditis elegans.